Here is a 258-residue protein sequence, read N- to C-terminus: MIPPADSLLKYDTPVLVSRNTEKRSPTARPLKVTIQQPGPSSTSPQPPKAKLPSTSCVPDPTKQAEEILNAILPPREWVEDTQLWIQQVSSTPSTRMDVVHLQEQLDLKLQQRQARETGICPVRRELYSQCFDELIREVTINCAERGLLLLRVRDEIHMTIAAYQTLYESSVAFGMRKALQAEQGKSDMERKITELETEKRDLERQVNEQKAKCEATEKRESERRQVEEKKHNEEIQFLKRTNQQLKAQLEGIIAPKK.

Disordered regions lie at residues 1-60 (MIPP…CVPD) and 202-231 (DLERQVNEQKAKCEATEKRESERRQVEEKK). Residues 176 to 255 (MRKALQAEQG…LKAQLEGIIA (80 aa)) adopt a coiled-coil conformation.

The protein belongs to the inner dynein arm light chain family. As to quaternary structure, interacts with CFAP45. Interacts with DYNC1H1. As to expression, predominantly expressed in the testis, also detected at lower levels in several tissues expressing cilia. Strongly expressed in elongating spermatid cells (at protein level).

It is found in the cell projection. It localises to the cilium. Its subcellular location is the flagellum. The protein localises to the dynein axonemal particle. The protein resides in the cytoplasm. Its function is as follows. Involved in sperm flagellum assembly. The sequence is that of Axonemal dynein light intermediate polypeptide 1 from Mus musculus (Mouse).